Here is a 332-residue protein sequence, read N- to C-terminus: MQSWVNKLWYDGHVLRFALWPLSLLFAAITWFRRQLYAVGLKPQATFPVPVIIVGNITVGGSGKTPTVIYLIELLRKHGYKPGVISRGYGVQIDGVRSVYPSNNANQVGDEPAMIVARTNIPMVVGAKRIDAAQQLLNDFDVDIIISDDGLQHYALARDIELIILDGERRLGNGMLLPAGPLREGGWRAAAVDHVIVNGGEAQSGEQQMLLQPTLWHSVNGKQSPDTAPEPEQDVVAMAGIGNPSRFFDTLADMGYRLDKVQAFDDHSAYSEATLTALAGELPLLMTEKDAVKCREFAKDNWWYLAVDAKLPHSFDQQLLTRVKQVVEEKQR.

Residue 58–65 (TVGGSGKT) coordinates ATP.

The protein belongs to the LpxK family.

It catalyses the reaction a lipid A disaccharide + ATP = a lipid IVA + ADP + H(+). It participates in glycolipid biosynthesis; lipid IV(A) biosynthesis; lipid IV(A) from (3R)-3-hydroxytetradecanoyl-[acyl-carrier-protein] and UDP-N-acetyl-alpha-D-glucosamine: step 6/6. In terms of biological role, transfers the gamma-phosphate of ATP to the 4'-position of a tetraacyldisaccharide 1-phosphate intermediate (termed DS-1-P) to form tetraacyldisaccharide 1,4'-bis-phosphate (lipid IVA). The polypeptide is Tetraacyldisaccharide 4'-kinase (Shewanella piezotolerans (strain WP3 / JCM 13877)).